We begin with the raw amino-acid sequence, 359 residues long: Aromatic amino acid aminotransferase (359 aa).

Over residues 1–12 (MSETSPKLRAEL) the composition is skewed to basic and acidic residues. A disordered region spans residues 1 to 21 (MSETSPKLRAELEGIPTYKPG). Residue Lys-223 is modified to N6-(pyridoxal phosphate)lysine.

This sequence belongs to the class-II pyridoxal-phosphate-dependent aminotransferase family. Homodimer. It depends on pyridoxal 5'-phosphate as a cofactor.

The catalysed reaction is an aromatic L-alpha-amino acid + 2-oxoglutarate = an aromatic oxo-acid + L-glutamate. In terms of biological role, aminotransferase that catalyzes the conversion of aromatic amino acids and 2-oxoglutarate into corresponding aromatic oxo acids and L-glutamate. The sequence is that of Aromatic amino acid aminotransferase from Streptomyces coelicolor (strain ATCC BAA-471 / A3(2) / M145).